A 134-amino-acid polypeptide reads, in one-letter code: Ribonuclease P protein component (134 aa).

The protein belongs to the RnpA family. As to quaternary structure, consists of a catalytic RNA component (M1 or rnpB) and a protein subunit.

It carries out the reaction Endonucleolytic cleavage of RNA, removing 5'-extranucleotides from tRNA precursor.. Functionally, RNaseP catalyzes the removal of the 5'-leader sequence from pre-tRNA to produce the mature 5'-terminus. It can also cleave other RNA substrates such as 4.5S RNA. The protein component plays an auxiliary but essential role in vivo by binding to the 5'-leader sequence and broadening the substrate specificity of the ribozyme. The polypeptide is Ribonuclease P protein component (Pseudomonas putida (strain ATCC 700007 / DSM 6899 / JCM 31910 / BCRC 17059 / LMG 24140 / F1)).